Here is a 61-residue protein sequence, read N- to C-terminus: Large ribosomal subunit protein bL28 (61 aa).

The protein belongs to the bacterial ribosomal protein bL28 family.

This chain is Large ribosomal subunit protein bL28, found in Nautilia profundicola (strain ATCC BAA-1463 / DSM 18972 / AmH).